The primary structure comprises 1881 residues: MIAFGAPRRRSFGLLFSLAPHLFFLFLIGTLANKLNVPQVLLPFSREPGRVPFLLEAQRGCYIWHSTHHDAVTIQPLYENGTSCSQRAVLVAESTQPIRLSSIILAREVVTDHELRCDVKVDVIDNIEIVSRTRELYVDDAPLELMVRALDSKGNTFSTLAGMVFEWSIAQDNESSREELSSKIRILKYSEAEYSPPDYIIEMEKQERQGDVILVSGMRTGAAVVKVRIYEPFYKKVAAALIRLLVLENIFLIPSHDTYLLVGAYIKYRVAKMVQGRMTEVNFPLEHYTLELQDHRLTNGGLPSKSVALLDEKTAMVTAVQLGQTNLVFVHKNVHMRSVSGLPNSTIYVVEPGFLGFSIHPGGRWSLEVGQVYVITVEVFDKSSTRVYISDNLKITFQFSKEYFEEQLSTSNGSYHVVKALKDGVVVINATLTSSLQERNSSQPKTYQISHQQEVKIYFPIQLKPSFLAFPHHPLGISNRFTVQVEGGSGNFTWSSSNETVAMVTTKGVVTAGQVRGNSTILARDVQNPSRSGDIKVYVMKLNKMELLPFQADVEIGQIIEVPIAMYHVNTETKEAIAFTDCSHLPLDLNSDKQGVFTLFKEGIQKPGAMHCSSVHIAATSPGHTLVTVSVTGHEEHAWSSATFAAYEPLKALNPVDVALVTWQSVKEMVFEGGPHPWILEPSRFFLELSMEKAEAIRVAEVRLPAKRKQNQYVYRVLCLELGEQVLTFRIGNHPGVLNPSPSVEKVQVRFICAHPASMLVTPMYKAPSGTQPCPLPQYNKQLIPVSSLRDSVLELAVFDQHGRKFDNFSSLMLEWKSSNETLAHFEDSKSVEMVARDDGSGQTRLHGHQILKVHQMKGTVLIGVNFAGYSGKKSPKGISNSPRSAGVELILVEDVTVQPENATIYNHPDVKEIFNLVEGSGYFLINSSEQDIVTITYREAESSVQLVPAHPGFLTLEVYDLCLAYLGPAVAQIRVSDIQELELDLIDKVEIGKTVLVVVRVLGSSKHPFRNKYFRNMEVRLQLASAIVTLRLMEDQDEYSENYMLRAVTVGQTTLVAIATDRMGKKFTSAPRHIEVFPPFRLIPEKMTLIATNMMQIMSEGGPQPQSIIHFSISNQTVAVVNRRGQVTGKSVGTAVLHGTIQTVNEDTGKVIVFSQDEVQIEVVQLQAVRILAAATRLVTATEMPVYVMGVTSTQTPFSFSNASPLLTFHWSMSKRDVLDLVPRHSEVFLQLPAENNFAMVVHTKAAGRTTIKVTVRSENSSSGQLEGNLLELSDEIQILVFEKLQLFYANCQPEQILMPMNSQLKLHTNREGAAFVSSRVLKCFPNSSVIEEDGGGLLRSGSIAGTAVLEVTSIEPFGVNQTTITGVQVAPVTYLRLSSYPKLYTAQGRTLSAFPLGMSLTFIVEFYNNIGEKFHTHNTRLYMALNRDDLLLIGPGNRNYTYMAQAVNKGVTVVGLWDQRHPGMADYIPVAVEHAIEPDTKLIFVGDVICFSTQLVNQHGEPGVWMISTNNIVQTDTATGVGVARNPGTATIFHNIPGVVKTFREVVVNASSRLTLSYDLKTYLTNTPNATAFKLFISTGRNVNLKGSCTPSQALAIEKVLLPETLMLCHVQFSNTLLDIPASKVFHIHSEFSVEKGVYVCLIKVRQESKELRQVLSVADTSVYGWATLVSERGKNGMQRILIPFIPGFYMNQSEFVLGHKDTGELRILGVERVLESLEVFHSSPFLAVSGYKHSMLTTGLTVYLVRIVNFTAFQQMSSPAFINVSCALTNQQEAVIVRAKDASGADHCEDSGVFKNFVGSYQILLFTLFAVLASTSFIFLAHNAFLNKVQTIPVVYVPTTGTTQPGSYTATCSPPHFLSSRPPLVQSRLQHWLWSIKH.

The signal sequence occupies residues 1 to 32; the sequence is MIAFGAPRRRSFGLLFSLAPHLFFLFLIGTLA. N-linked (GlcNAc...) asparagine glycosylation is found at N80, N344, and N808. The 73-residue stretch at 1078–1150 folds into the BIG2 domain; sequence FPPFRLIPEK…TIQTVNEDTG (73 aa). N1441 carries an N-linked (GlcNAc...) asparagine glycan. Residues 1804–1824 traverse the membrane as a helical segment; sequence YQILLFTLFAVLASTSFIFLA.

The protein belongs to the NUP210 family. As to expression, expressed in testis.

It localises to the nucleus membrane. Its subcellular location is the nucleus. The protein resides in the nucleoplasm. This chain is Nuclear pore membrane glycoprotein 210-like (Nup210l), found in Mus musculus (Mouse).